Here is a 736-residue protein sequence, read N- to C-terminus: Serine/threonine-protein kinase BRSK2 (736 aa).

Residues Tyr-19–Tyr-270 form the Protein kinase domain. ATP contacts are provided by residues Leu-25–Val-33 and Lys-48. Residue Asp-141 is the Proton acceptor of the active site. Thr-174 is subject to Phosphothreonine; by LKB1. The residue at position 260 (Thr-260) is a Phosphothreonine; by PKA. Ser-294 carries the post-translational modification Phosphoserine. The UBA domain maps to Asp-297–Asp-339. Residues Pro-345–Asp-366 show a composition bias toward basic and acidic residues. Disordered stretches follow at residues Pro-345–Trp-475 and His-493–Ser-513. Phosphoserine occurs at positions 367, 382, 393, 412, 416, 423, and 427. The segment covering Ser-410–Pro-428 has biased composition (low complexity). Over residues Thr-431–Lys-445 the composition is skewed to pro residues. At Ser-455 the chain carries Phosphoserine. Phosphothreonine occurs at positions 459, 463, and 509. 3 positions are modified to phosphoserine: Ser-512, Ser-513, and Ser-520. A KEN box motif is present at residues Lys-603 to Asn-605. Positions Lys-681–Pro-736 are disordered. A compositionally biased stretch (low complexity) spans Gly-699–Gly-708.

Belongs to the protein kinase superfamily. CAMK Ser/Thr protein kinase family. SNF1 subfamily. As to quaternary structure, interacts with FZR1, a regulatory subunit of the APC ubiquitin ligase complex. Interacts with COPS5. Interacts with PAK1. Mg(2+) serves as cofactor. In terms of processing, phosphorylated at Thr-174 by STK11/LKB1 in complex with STE20-related adapter-alpha (STRADA) pseudo kinase and CAB39. Not phosphorylated at Thr-174 by CaMKK2. In contrast, it is phosphorylated and activated by CaMKK1. May be inactivated via dephosphorylation of Thr-174 by PP2C. Phosphorylated at Thr-260 by PKA. Phosphorylation at Thr-260 by PKA was not observed in another study, but this may reflect differences in the experimental approach. Phosphorylation at Thr-260 seems to play a role in the regulation of insulin secretion. Polyubiquitinated by the APC complex in conjunction with FZR1, leading to its proteasomal degradation. Targeted for proteasomal degradation by interaction with COPS5. BRSK2 levels change during the cell cycle. BRSK2 levels are low at the G1/S boundary and gradually increase as cells progress into G2 phase. BRSK2 levels decrease rapidly at the end of mitosis. Detected in pancreas islets (at protein level).

It is found in the cytoplasm. It localises to the cytoskeleton. Its subcellular location is the microtubule organizing center. The protein localises to the centrosome. The protein resides in the perinuclear region. It is found in the endoplasmic reticulum. It carries out the reaction L-seryl-[protein] + ATP = O-phospho-L-seryl-[protein] + ADP + H(+). The catalysed reaction is L-threonyl-[protein] + ATP = O-phospho-L-threonyl-[protein] + ADP + H(+). It catalyses the reaction L-seryl-[tau protein] + ATP = O-phospho-L-seryl-[tau protein] + ADP + H(+). The enzyme catalyses L-threonyl-[tau protein] + ATP = O-phospho-L-threonyl-[tau protein] + ADP + H(+). Its activity is regulated as follows. Activated by phosphorylation on Thr-174 by STK11/LKB1. Its function is as follows. Serine/threonine-protein kinase that plays a key role in polarization of neurons and axonogenesis, cell cycle progress and insulin secretion. Phosphorylates CDK16, CDC25C, MAPT/TAU, PAK1 and WEE1. Following phosphorylation and activation by STK11/LKB1, acts as a key regulator of polarization of cortical neurons, probably by mediating phosphorylation of microtubule-associated proteins such as MAPT/TAU at 'Thr-529' and 'Ser-579'. Also regulates neuron polarization by mediating phosphorylation of WEE1 at 'Ser-642' in postmitotic neurons, leading to down-regulate WEE1 activity in polarized neurons. Plays a role in the regulation of the mitotic cell cycle progress and the onset of mitosis. Plays a role in the regulation of insulin secretion in response to elevated glucose levels, probably via phosphorylation of CDK16 and PAK1. While BRSK2 phosphorylated at Thr-174 can inhibit insulin secretion, BRSK2 phosphorylated at Thr-260 can promote insulin secretion. Regulates reorganization of the actin cytoskeleton. May play a role in the apoptotic response triggered by endoplasmic reticulum (ER) stress. The protein is Serine/threonine-protein kinase BRSK2 (BRSK2) of Homo sapiens (Human).